Reading from the N-terminus, the 461-residue chain is MEDLDALLSDLETTTSHMSRLGAPKERPPETLTPPPPYGHQPQTGSGESSGTTGDKDHLYSTVCKPRSPKPVAPVAPPFSSSSGVLGNGLCELDRLLQELNATQFNITDEIMSQFPSSKMAEGEEKEDQSEDKSSPTVPPSPFPAPSKPSATSATQELDRLMASLSDFRVQNHLPASGPPQPPAASPTREGCPSPPGQTSKGSLDTMLGLLQSDLSRRGVPTQAKGLCGSCNKPIAGQVVTALGRAWHPEHFLCSGCSTTLGGSSFFEKDGAPFCPECYFERFSPRCGFCNQPIRHKMVTALGTHWHPEHFCCVSCGEPFGEEGFHEREGRPYCRRDFLQLFAPRCQGCQGPILDNYISALSALWHPDCFVCRECLAPFSGGSFFEHEGRPLCENHFHAQRGSLCATCGLPVTGRCVSALGRRFHPDHFTCTFCLRPLTKGSFQERASKPYCQPCFLKLFG.

Met-1 carries the N-acetylmethionine modification. The segment at 1 to 87 (MEDLDALLSD…PFSSSSGVLG (87 aa)) is disordered. The segment at 1–200 (MEDLDALLSD…GCPSPPGQTS (200 aa)) is transcription activation. The interval 1–240 (MEDLDALLSD…CNKPIAGQVV (240 aa)) is interaction with PTK2B/PYK2. Residues 3 to 15 (DLDALLSDLETTT) carry the LD motif 1 motif. A Phosphothreonine modification is found at Thr-33. Tyr-38 is modified (phosphotyrosine). Residues 44-53 (TGSGESSGTT) show a composition bias toward low complexity. Tyr-60 carries the phosphotyrosine modification. The residue at position 68 (Ser-68) is a Phosphoserine. Residues 83-136 (SGVLGNGLCELDRLLQELNATQFNITDEIMSQFPSSKMAEGEEKEDQSEDKSSP) form an interaction with PTK2/FAK1 region. The LD motif 2 signature appears at 92–104 (ELDRLLQELNATQ). A disordered region spans residues 116–154 (PSSKMAEGEEKEDQSEDKSSPTVPPSPFPAPSKPSATSA). The segment covering 137-147 (TVPPSPFPAPS) has biased composition (pro residues). A phosphoserine mark is found at Ser-141, Ser-164, and Ser-186. The short motif at 157 to 168 (ELDRLMASLSDF) is the LD motif 3 element. Residues 171–204 (QNHLPASGPPQPPAASPTREGCPSPPGQTSKGSL) form a disordered region. A Phosphothreonine modification is found at Thr-188. A Phosphoserine modification is found at Ser-194. An LD motif 4 motif is present at residues 203-215 (SLDTMLGLLQSDL). LIM zinc-binding domains are found at residues 226–285 (GLCG…RFSP), 286–343 (RCGF…QLFA), 344–403 (PRCQ…QRGS), and 404–461 (LCAT…KLFG). The residue at position 403 (Ser-403) is a Phosphoserine. Thr-407 carries the phosphothreonine modification.

The protein belongs to the paxillin family. As to quaternary structure, homooligomer. Interacts with PPARG. Interacts with TRAF4. Interacts with CRIP2. Interacts with HSPB1. Interacts with ILK. Interacts with LIMS1 and LIMS2. Interacts with NCK2. Interacts with NUDT16L1. Interacts with PAK. Interacts with PTPN12. Interacts with TCF3. Interacts with TCF7L2. Interacts with VCL. Interacts (via LD motif 3) with GIT1. Also interacts with GIT2. Forms a complex with ARHGEF7. Interacts with AR/androgen receptor in a ligand-dependent manner. Interacts with CSK. Interacts with PTK2/FAK1 and PTK2B/PYK2. Interacts with SLC6A3. Interacts with SLC6A4. Interacts with NR3C1. Interacts with SMAD3. Interacts with MAPK15. Interacts with SRC. Interacts with LYN. Interacts with talin. Interacts (via LIM zinc-binding domain 2) with CBLC (via RING-type zinc finger); the interaction is direct and enhances CBLC E3 ubiquitin-protein ligase activity. Interacts with PARVA. Interacts with PXN. Post-translationally, phosphorylated by gonadotropin-releasing hormone-activated SRC. In terms of tissue distribution, ubiquitously expressed. Higher expression is detected in lung and spleen. Expression decreases during pregnancy in mammary glands. Expressed in all brain areas, with higher levels in cerebellum, prefrontal cortex and hypothalamus. Expressed in smooth muscle, myoepithelial cells and platelets (at protein level). Preferentially expressed in mesenchymal versus epithelial cells (at protein level).

Its subcellular location is the cell junction. It is found in the focal adhesion. The protein localises to the nucleus matrix. It localises to the cytoplasm. The protein resides in the cytoskeleton. Its function is as follows. Functions as a molecular adapter coordinating multiple protein-protein interactions at the focal adhesion complex and in the nucleus. Links various intracellular signaling modules to plasma membrane receptors and regulates the Wnt and TGFB signaling pathways. May also regulate SLC6A3 and SLC6A4 targeting to the plasma membrane hence regulating their activity. In the nucleus, functions as a nuclear receptor coactivator regulating glucocorticoid, androgen, mineralocorticoid and progesterone receptor transcriptional activity. May play a role in the processes of cell growth, proliferation, migration, differentiation and senescence. May have a zinc-dependent DNA-binding activity. The sequence is that of Transforming growth factor beta-1-induced transcript 1 protein (Tgfb1i1) from Mus musculus (Mouse).